A 314-amino-acid chain; its full sequence is 4-hydroxy-3-methylbut-2-enyl diphosphate reductase (314 aa).

Residue Cys-12 coordinates [4Fe-4S] cluster. Residues His-41 and His-74 each coordinate (2E)-4-hydroxy-3-methylbut-2-enyl diphosphate. The dimethylallyl diphosphate site is built by His-41 and His-74. Isopentenyl diphosphate contacts are provided by His-41 and His-74. A [4Fe-4S] cluster-binding site is contributed by Cys-96. His-124 is a (2E)-4-hydroxy-3-methylbut-2-enyl diphosphate binding site. His-124 serves as a coordination point for dimethylallyl diphosphate. His-124 contributes to the isopentenyl diphosphate binding site. The Proton donor role is filled by Glu-126. Thr-167 is a (2E)-4-hydroxy-3-methylbut-2-enyl diphosphate binding site. Cys-197 is a binding site for [4Fe-4S] cluster. (2E)-4-hydroxy-3-methylbut-2-enyl diphosphate is bound by residues Ser-225, Ser-226, Asn-227, and Ser-269. Residues Ser-225, Ser-226, Asn-227, and Ser-269 each contribute to the dimethylallyl diphosphate site. Ser-225, Ser-226, Asn-227, and Ser-269 together coordinate isopentenyl diphosphate.

This sequence belongs to the IspH family. [4Fe-4S] cluster serves as cofactor.

It catalyses the reaction isopentenyl diphosphate + 2 oxidized [2Fe-2S]-[ferredoxin] + H2O = (2E)-4-hydroxy-3-methylbut-2-enyl diphosphate + 2 reduced [2Fe-2S]-[ferredoxin] + 2 H(+). The enzyme catalyses dimethylallyl diphosphate + 2 oxidized [2Fe-2S]-[ferredoxin] + H2O = (2E)-4-hydroxy-3-methylbut-2-enyl diphosphate + 2 reduced [2Fe-2S]-[ferredoxin] + 2 H(+). Its pathway is isoprenoid biosynthesis; dimethylallyl diphosphate biosynthesis; dimethylallyl diphosphate from (2E)-4-hydroxy-3-methylbutenyl diphosphate: step 1/1. It participates in isoprenoid biosynthesis; isopentenyl diphosphate biosynthesis via DXP pathway; isopentenyl diphosphate from 1-deoxy-D-xylulose 5-phosphate: step 6/6. Catalyzes the conversion of 1-hydroxy-2-methyl-2-(E)-butenyl 4-diphosphate (HMBPP) into a mixture of isopentenyl diphosphate (IPP) and dimethylallyl diphosphate (DMAPP). Acts in the terminal step of the DOXP/MEP pathway for isoprenoid precursor biosynthesis. The sequence is that of 4-hydroxy-3-methylbut-2-enyl diphosphate reductase from Psychromonas ingrahamii (strain DSM 17664 / CCUG 51855 / 37).